Here is a 1412-residue protein sequence, read N- to C-terminus: uncharacterized protein (1412 aa).

Residues 1-22 (MESINVVNSVEDLPGFNPDENV) form a disordered region. 2 coiled-coil regions span residues 317-377 (NNDF…ILRH) and 732-800 (SKEA…SDDE). Residues 778–808 (SRKRKHEDIVKEHEAEKRDSDDEDDFEEVDV) form a disordered region. Positions 783 to 797 (HEDIVKEHEAEKRDS) are enriched in basic and acidic residues. Residues 798–808 (DDEDDFEEVDV) show a composition bias toward acidic residues.

This is an uncharacterized protein from Magallana gigas (Pacific oyster).